The chain runs to 284 residues: 2-dehydro-3-deoxyphosphooctonate aldolase (284 aa).

This sequence belongs to the KdsA family.

It is found in the cytoplasm. The catalysed reaction is D-arabinose 5-phosphate + phosphoenolpyruvate + H2O = 3-deoxy-alpha-D-manno-2-octulosonate-8-phosphate + phosphate. Its pathway is carbohydrate biosynthesis; 3-deoxy-D-manno-octulosonate biosynthesis; 3-deoxy-D-manno-octulosonate from D-ribulose 5-phosphate: step 2/3. It functions in the pathway bacterial outer membrane biogenesis; lipopolysaccharide biosynthesis. This chain is 2-dehydro-3-deoxyphosphooctonate aldolase, found in Burkholderia mallei (strain NCTC 10247).